Reading from the N-terminus, the 778-residue chain is Endonuclease MutS2 (778 aa).

328–335 (GPNTGGKT) contributes to the ATP binding site. The Smr domain occupies 702 to 777 (LDLRGKRYEE…GSGATIVTFK (76 aa)).

This sequence belongs to the DNA mismatch repair MutS family. MutS2 subfamily. In terms of assembly, homodimer. Binds to stalled ribosomes, contacting rRNA.

Functionally, endonuclease that is involved in the suppression of homologous recombination and thus may have a key role in the control of bacterial genetic diversity. Its function is as follows. Acts as a ribosome collision sensor, splitting the ribosome into its 2 subunits. Detects stalled/collided 70S ribosomes which it binds and splits by an ATP-hydrolysis driven conformational change. Acts upstream of the ribosome quality control system (RQC), a ribosome-associated complex that mediates the extraction of incompletely synthesized nascent chains from stalled ribosomes and their subsequent degradation. Probably generates substrates for RQC. The sequence is that of Endonuclease MutS2 from Streptococcus pneumoniae (strain JJA).